Consider the following 274-residue polypeptide: Urease accessory protein UreD 2 (274 aa).

The protein belongs to the UreD family. As to quaternary structure, ureD, UreF and UreG form a complex that acts as a GTP-hydrolysis-dependent molecular chaperone, activating the urease apoprotein by helping to assemble the nickel containing metallocenter of UreC. The UreE protein probably delivers the nickel.

The protein resides in the cytoplasm. Functionally, required for maturation of urease via the functional incorporation of the urease nickel metallocenter. The chain is Urease accessory protein UreD 2 from Brucella anthropi (strain ATCC 49188 / DSM 6882 / CCUG 24695 / JCM 21032 / LMG 3331 / NBRC 15819 / NCTC 12168 / Alc 37) (Ochrobactrum anthropi).